The sequence spans 941 residues: MSDYKHTLNLPQTDFPMRGNLPQREPDMLKRWGDIELYEKIREEFKGREKFILHDGPPYANGNIHLGHAVNKILKDIIVKSKTVAGYDAPYVPGWDCHGLPIEHKVETMIGRAGDKVGYKEFRRKCREYALEQVAKQREDFIRLGVFGDWFKPYLTLDFKTEADIIRALGKIATSGHLQKGYKPVYWSVVGGSALAEAEVEYKDKTSNSIDVSYPAENEQDLLSAFADASGEGAVSIVIWTTTPWTLPASLAVSLGAEIDYALTQCSVDGRPQRWIVAEKMLESVMARCGVEDYQVVGRCTGQDLEGKTFLHPFYKRSIPALLGDHVTLDAGTGVVHTAPDHGMEDFAVCNKYGIETINPLDDRGVYRDNVELFAGEHVYKVDDHVIEVLKERGRLLSHGKITHSYAHCWRTKTPLIYRATPQWFISMDKQGLRDQALAEIKLVRWVPSWGQNRIEAMIEQSPDWCISRQRTWGVPIAFFVHKETQELHPDTARLVEEVAKQVEKTGIDAWWDINAEDLLGADAQNYEKVTDTLDVWFDSGVTHSAVLEQREELGQFPADLYLEGSDQHRGWFQSSLKTAVAIKGKAPYRQVLTHGFTVDEKGHKMSKSLGNGIEPQEVMNKLGADILRLWVAATDYSAEMVLSKNILERTADSYRRIRNTSRFLLANINDFDPVKDMVAMDDLLALDRWIVDRAWLLQEELKKAYEQYNFVQVYQKVHNFCSVELGSFYLDVIKDRQYTMKLDSLGCRSAQTAQYHVIEALVRWIAPILSFTAEEIWSYIPGQRAESIFLETFYEGLQPLAEGSEMGRDYWSRLLRVRTSVNKALEEARNAGKVKGSLTTEVSLFATPEMQHDLNALGEELRFVFITSGASVFGVEDASESNSVATETEGLRVGIRSSEHKKCGRCWHHREDVGAHGSHEDLCGRCIENIDGSGEERKYA.

Positions 58 to 68 (PYANGNIHLGH) match the 'HIGH' region motif. An L-isoleucyl-5'-AMP-binding site is contributed by Glu-564. The 'KMSKS' region motif lies at 605 to 609 (KMSKS). Lys-608 is an ATP binding site. 4 residues coordinate Zn(2+): Cys-904, Cys-907, Cys-924, and Cys-927.

The protein belongs to the class-I aminoacyl-tRNA synthetase family. IleS type 1 subfamily. Monomer. The cofactor is Zn(2+).

It localises to the cytoplasm. It carries out the reaction tRNA(Ile) + L-isoleucine + ATP = L-isoleucyl-tRNA(Ile) + AMP + diphosphate. In terms of biological role, catalyzes the attachment of isoleucine to tRNA(Ile). As IleRS can inadvertently accommodate and process structurally similar amino acids such as valine, to avoid such errors it has two additional distinct tRNA(Ile)-dependent editing activities. One activity is designated as 'pretransfer' editing and involves the hydrolysis of activated Val-AMP. The other activity is designated 'posttransfer' editing and involves deacylation of mischarged Val-tRNA(Ile). In Hahella chejuensis (strain KCTC 2396), this protein is Isoleucine--tRNA ligase.